The sequence spans 407 residues: Na(+)-translocating NADH-quinone reductase subunit F (407 aa).

Residues 3–23 (ITLGIAMFTVIVLALAVLILF) form a helical membrane-spanning segment. Residues 32–126 (GDITIEINDD…SMKIELPEEV (95 aa)) form the 2Fe-2S ferredoxin-type domain. Cys69, Cys75, Cys78, and Cys110 together coordinate [2Fe-2S] cluster. The FAD-binding FR-type domain occupies 129-269 (VKKWECTVIS…SGPFGEFFAK (141 aa)).

This sequence belongs to the NqrF family. As to quaternary structure, composed of six subunits; NqrA, NqrB, NqrC, NqrD, NqrE and NqrF. It depends on [2Fe-2S] cluster as a cofactor. The cofactor is FAD.

The protein resides in the cell inner membrane. The catalysed reaction is a ubiquinone + n Na(+)(in) + NADH + H(+) = a ubiquinol + n Na(+)(out) + NAD(+). Functionally, NQR complex catalyzes the reduction of ubiquinone-1 to ubiquinol by two successive reactions, coupled with the transport of Na(+) ions from the cytoplasm to the periplasm. The first step is catalyzed by NqrF, which accepts electrons from NADH and reduces ubiquinone-1 to ubisemiquinone by a one-electron transfer pathway. This chain is Na(+)-translocating NADH-quinone reductase subunit F, found in Histophilus somni (strain 129Pt) (Haemophilus somnus).